The primary structure comprises 175 residues: MEELIAKRYATALSSVSKDVKSIASVLNVLSEAISVPEVHEALTSPIVSAEKKTDMILSAIGKEADATMVNFIKILGENKRLDLIPAIAKVLNADLQKESNQYEGVLKSSSELGKEELAKLEKTLETYTGSKIELKQEKTDLEGLRVSVDDLGIEVNFSKQRVKEQLIDFIKKSL.

It belongs to the ATPase delta chain family. F-type ATPases have 2 components, F(1) - the catalytic core - and F(0) - the membrane proton channel. F(1) has five subunits: alpha(3), beta(3), gamma(1), delta(1), epsilon(1). F(0) has three main subunits: a(1), b(2) and c(10-14). The alpha and beta chains form an alternating ring which encloses part of the gamma chain. F(1) is attached to F(0) by a central stalk formed by the gamma and epsilon chains, while a peripheral stalk is formed by the delta and b chains.

The protein localises to the cell inner membrane. In terms of biological role, f(1)F(0) ATP synthase produces ATP from ADP in the presence of a proton or sodium gradient. F-type ATPases consist of two structural domains, F(1) containing the extramembraneous catalytic core and F(0) containing the membrane proton channel, linked together by a central stalk and a peripheral stalk. During catalysis, ATP synthesis in the catalytic domain of F(1) is coupled via a rotary mechanism of the central stalk subunits to proton translocation. Its function is as follows. This protein is part of the stalk that links CF(0) to CF(1). It either transmits conformational changes from CF(0) to CF(1) or is implicated in proton conduction. This Sulfurovum sp. (strain NBC37-1) protein is ATP synthase subunit delta.